A 458-amino-acid polypeptide reads, in one-letter code: Monomethylamine methyltransferase MtmB2 (458 aa).

Residue pyrrolysine 202 is a non-standard amino acid, pyrrolysine.

The protein belongs to the monomethylamine methyltransferase family. In terms of assembly, can form a complex with MtmC.

It catalyses the reaction Co(I)-[methylamine-specific corrinoid protein] + methylamine + H(+) = methyl-Co(III)-[methylamine-specific corrinoid protein] + NH4(+). The protein operates within one-carbon metabolism; methanogenesis from methylamine. Functionally, catalyzes the transfer of the methyl group from monomethylamine to the corrinoid cofactor of MtmC. The polypeptide is Monomethylamine methyltransferase MtmB2 (mtmB2) (Methanosarcina acetivorans (strain ATCC 35395 / DSM 2834 / JCM 12185 / C2A)).